A 304-amino-acid chain; its full sequence is Porphobilinogen deaminase (304 aa).

An S-(dipyrrolylmethanemethyl)cysteine modification is found at C240.

The protein belongs to the HMBS family. Monomer. It depends on dipyrromethane as a cofactor.

It catalyses the reaction 4 porphobilinogen + H2O = hydroxymethylbilane + 4 NH4(+). The protein operates within porphyrin-containing compound metabolism; protoporphyrin-IX biosynthesis; coproporphyrinogen-III from 5-aminolevulinate: step 2/4. In terms of biological role, tetrapolymerization of the monopyrrole PBG into the hydroxymethylbilane pre-uroporphyrinogen in several discrete steps. The protein is Porphobilinogen deaminase of Xanthomonas axonopodis pv. citri (strain 306).